The following is a 616-amino-acid chain: uncharacterized protein (616 aa).

This is an uncharacterized protein from Methanocaldococcus jannaschii (strain ATCC 43067 / DSM 2661 / JAL-1 / JCM 10045 / NBRC 100440) (Methanococcus jannaschii).